The chain runs to 377 residues: Chaperone protein DnaJ (377 aa).

The region spanning 5–70 (DFYETLGVSK…QKRAAYDRFG (66 aa)) is the J domain. The segment at 138–216 (GKTAQIRVPT…CHGQGRVTEE (79 aa)) adopts a CR-type zinc-finger fold. Zn(2+) is bound by residues Cys151, Cys154, Cys168, Cys171, Cys190, Cys193, Cys204, and Cys207. CXXCXGXG motif repeat units follow at residues 151–158 (CDVCSGSG), 168–175 (CATCQGSG), 190–197 (CPTCHGRG), and 204–211 (CGKCHGQG).

Belongs to the DnaJ family. As to quaternary structure, homodimer. Zn(2+) serves as cofactor.

The protein localises to the cytoplasm. Participates actively in the response to hyperosmotic and heat shock by preventing the aggregation of stress-denatured proteins and by disaggregating proteins, also in an autonomous, DnaK-independent fashion. Unfolded proteins bind initially to DnaJ; upon interaction with the DnaJ-bound protein, DnaK hydrolyzes its bound ATP, resulting in the formation of a stable complex. GrpE releases ADP from DnaK; ATP binding to DnaK triggers the release of the substrate protein, thus completing the reaction cycle. Several rounds of ATP-dependent interactions between DnaJ, DnaK and GrpE are required for fully efficient folding. Also involved, together with DnaK and GrpE, in the DNA replication of plasmids through activation of initiation proteins. This Agrobacterium fabrum (strain C58 / ATCC 33970) (Agrobacterium tumefaciens (strain C58)) protein is Chaperone protein DnaJ.